The primary structure comprises 158 residues: Serine-protein kinase RsbW (158 aa).

The protein belongs to the anti-sigma-factor family.

It carries out the reaction L-seryl-[protein] + ATP = O-phospho-L-seryl-[protein] + ADP + H(+). The enzyme catalyses L-threonyl-[protein] + ATP = O-phospho-L-threonyl-[protein] + ADP + H(+). Functionally, negative regulator of sigma-B activity. Phosphorylates and inactivates its specific antagonist protein, RsbV. Upon phosphorylation of RsbV, RsbW is released and binds to sigma-B, thereby blocking its ability to form an RNA polymerase holoenzyme (E-sigma-B). The sequence is that of Serine-protein kinase RsbW from Oceanobacillus iheyensis (strain DSM 14371 / CIP 107618 / JCM 11309 / KCTC 3954 / HTE831).